A 154-amino-acid polypeptide reads, in one-letter code: Myoglobin (154 aa).

Positions 2–148 constitute a Globin domain; it reads GLSDGEWQLV…FRNDIAAKYK (147 aa). Ser4 carries the post-translational modification Phosphoserine. Nitrite is bound at residue His65. Residue His65 coordinates O2. Thr68 carries the phosphothreonine modification. A heme b-binding site is contributed by His94.

Belongs to the globin family. As to quaternary structure, monomeric.

The protein localises to the cytoplasm. Its subcellular location is the sarcoplasm. The enzyme catalyses Fe(III)-heme b-[protein] + nitric oxide + H2O = Fe(II)-heme b-[protein] + nitrite + 2 H(+). The catalysed reaction is H2O2 + AH2 = A + 2 H2O. Its function is as follows. Monomeric heme protein which primary function is to store oxygen and facilitate its diffusion within muscle tissues. Reversibly binds oxygen through a pentacoordinated heme iron and enables its timely and efficient release as needed during periods of heightened demand. Depending on the oxidative conditions of tissues and cells, and in addition to its ability to bind oxygen, it also has a nitrite reductase activity whereby it regulates the production of bioactive nitric oxide. Under stress conditions, like hypoxia and anoxia, it also protects cells against reactive oxygen species thanks to its pseudoperoxidase activity. The protein is Myoglobin (MB) of Lepilemur mustelinus (Weasel sportive lemur).